A 152-amino-acid polypeptide reads, in one-letter code: Protein E6 (152 aa).

Zinc fingers lie at residues 33 to 69 and 106 to 142; these read CIFC…CARC and CYMC…CQYC.

It belongs to the papillomaviridae E6 protein family. Forms homodimers. Interacts with ubiquitin-protein ligase UBE3A/E6-AP; this interaction stimulates UBE3A ubiquitin activity. Interacts with host TP53 and EP300; this interaction inhibits TP53 activity.

The protein resides in the host cytoplasm. The protein localises to the host nucleus. Functionally, plays a major role in the induction and maintenance of cellular transformation. E6 associates with host UBE3A/E6-AP ubiquitin-protein ligase and modulates its activity. Sequesters tumor suppressor TP53 in the host cytoplasm and modulates its activity by interacting with host EP300 that results in the reduction of TP53 acetylation and activation. In turn, apoptosis induced by DNA damage is inhibited. E6 also protects host keratinocytes from apoptosis by mediating the degradation of host BAK1. May also inhibit host immune response. The sequence is that of Protein E6 from Human papillomavirus 3.